The chain runs to 584 residues: Interferon regulatory factor 2-binding protein 1 (584 aa).

A disordered region spans residues 59-120 (HVLPEGRSPG…RYDRATSSSR (62 aa)). S66 carries the post-translational modification Phosphoserine. Residues 82 to 100 (STGSQGSQLPPPQAQAQPS) show a composition bias toward low complexity. The residue at position 125 (S125) is a Phosphoserine. Residue R177 is modified to Omega-N-methylarginine. S186 carries the post-translational modification Phosphoserine. A coiled-coil region spans residues 197-217 (EKEKQQRNADCLAELNEAMRG). K227 participates in a covalent cross-link: Glycyl lysine isopeptide (Lys-Gly) (interchain with G-Cter in SUMO2). Disordered regions lie at residues 346-421 (PAEA…GVPS) and 433-495 (LGHS…GTGA). Pro residues predominate over residues 354–369 (YPEPAPAALCGPPPRA). 4 positions are modified to phosphoserine: S371, S384, S421, and S436. A Glycyl lysine isopeptide (Lys-Gly) (interchain with G-Cter in SUMO2) cross-link involves residue K438. The span at 449-458 (AGGASPAASS) shows a compositional bias: low complexity. Residues S453 and S457 each carry the phosphoserine modification. An RING-type; degenerate zinc finger spans residues 503 to 550 (CTLCRERLEDTHFVQCPSVPGHKFCFPCSREFIKAQGPAGEVYCPSGD). The cys-rich stretch occupies residues 503–550 (CTLCRERLEDTHFVQCPSVPGHKFCFPCSREFIKAQGPAGEVYCPSGD).

It belongs to the IRF2BP family. As to quaternary structure, interacts with IRF2. Part of a corepressor complex containing IRF2 and IRF2BP2. Interacts with JDP2.

The protein resides in the nucleus. It carries out the reaction S-ubiquitinyl-[E2 ubiquitin-conjugating enzyme]-L-cysteine + [acceptor protein]-L-lysine = [E2 ubiquitin-conjugating enzyme]-L-cysteine + N(6)-ubiquitinyl-[acceptor protein]-L-lysine.. Its function is as follows. Acts as a transcriptional corepressor in a IRF2-dependent manner; this repression is not mediated by histone deacetylase activities. May act as an E3 ligase towards JDP2, enhancing its polyubiquitination. Represses ATF2-dependent transcriptional activation. The sequence is that of Interferon regulatory factor 2-binding protein 1 (Irf2bp1) from Mus musculus (Mouse).